Consider the following 384-residue polypeptide: Probable tRNA sulfurtransferase (384 aa).

The 104-residue stretch at 57–160 (EEVVDRVRNV…KKTYIYSKRI (104 aa)) folds into the THUMP domain. ATP contacts are provided by residues 177–178 (ML), 202–203 (YF), R259, G281, and Q290.

This sequence belongs to the ThiI family.

The protein resides in the cytoplasm. It carries out the reaction [ThiI sulfur-carrier protein]-S-sulfanyl-L-cysteine + a uridine in tRNA + 2 reduced [2Fe-2S]-[ferredoxin] + ATP + H(+) = [ThiI sulfur-carrier protein]-L-cysteine + a 4-thiouridine in tRNA + 2 oxidized [2Fe-2S]-[ferredoxin] + AMP + diphosphate. The enzyme catalyses [ThiS sulfur-carrier protein]-C-terminal Gly-Gly-AMP + S-sulfanyl-L-cysteinyl-[cysteine desulfurase] + AH2 = [ThiS sulfur-carrier protein]-C-terminal-Gly-aminoethanethioate + L-cysteinyl-[cysteine desulfurase] + A + AMP + 2 H(+). Its pathway is cofactor biosynthesis; thiamine diphosphate biosynthesis. In terms of biological role, catalyzes the ATP-dependent transfer of a sulfur to tRNA to produce 4-thiouridine in position 8 of tRNAs, which functions as a near-UV photosensor. Also catalyzes the transfer of sulfur to the sulfur carrier protein ThiS, forming ThiS-thiocarboxylate. This is a step in the synthesis of thiazole, in the thiamine biosynthesis pathway. The sulfur is donated as persulfide by IscS. The polypeptide is Probable tRNA sulfurtransferase (Clostridium acetobutylicum (strain ATCC 824 / DSM 792 / JCM 1419 / IAM 19013 / LMG 5710 / NBRC 13948 / NRRL B-527 / VKM B-1787 / 2291 / W)).